Here is an 80-residue protein sequence, read N- to C-terminus: Metallothionein-like protein type 2, MT2-4/MT2-25 (80 aa).

It belongs to the metallothionein superfamily. Type 15 family.

In terms of biological role, metallothioneins have a high content of cysteine residues that bind various heavy metals. The polypeptide is Metallothionein-like protein type 2, MT2-4/MT2-25 (Brassica juncea (Indian mustard)).